Consider the following 647-residue polypeptide: Leucine-rich repeat and WD repeat-containing protein 1 (647 aa).

LRR repeat units lie at residues 22 to 43 (KIRSLDLSGLELLSEHLDPKLL), 48 to 69 (QLQELDLSNNHLETLPDNLGLS), 70 to 91 (HLRVLRCANNQLGDVTALCQFP), and 92 to 113 (KLEELSLEGNPFLTVNDNLKVS). Residues 204 to 267 (RTQVQKANSP…GSPVAGSDGS (64 aa)) form a disordered region. A phosphoserine mark is found at Ser-212, Ser-243, Ser-251, Ser-259, and Ser-264. WD repeat units follow at residues 282 to 335 (HSKN…LHKY), 341 to 379 (EFFSVAWTALMVVTQAGHKKRWSVLAAAGLRGLVRLLHV), 383 to 422 (FCCGVIRAHKKAIATLCFSPAHETHLFTASYDKRIILWDI), 426 to 472 (NQDY…CWDV), 484 to 526 (EVEF…LWSW), 542 to 582 (VVLA…LYDV), and 598 to 646 (APTQ…IWGR).

The protein belongs to the LRWD1 family. As to quaternary structure, integral component of the ORC complex. Directly interacts with CDT1, GMNN and ORC2. Interacts with ORC2 only when non-ubiquitinated; this interaction prevents LRWD1 ubiquitination and degradation. Some of these interactions are regulated in a cell-cycle dependent manner. Interaction with ORC1 occurs predominantly during G1. Association with phosphorylated ORC1 during mitosis is not efficient. Interaction with CDT1 occurs during G1 phase, as well as during mitosis with phosphorylated CDT1. Interaction with GMNN occurs from G1/S to mitosis. Interaction with ORC2 is observed throughout the cell cycle. The stoichiometry of the ORCA/ORC/CDT1/GMNN complex is 1:1:1:2. Interacts with CUL4A and DDB1; this interaction may lead to ubiquitination. In terms of processing, ubiquitinated; undergoes 'Lys-48'-linked polyubiquitination leading to proteasomal degradation. Ubiquitination occurs within the WD repeats at the end of the G1 phase. Ubiquitination may be catalyzed by the CUL4-DDB1 E3 ubiquitin-protein ligase complex and other E3 ligases. In terms of tissue distribution, testis-specific. Drastically down-regulated in testis from patients with Sertoli cell-only syndrome (SCOS).

Its subcellular location is the nucleus. It localises to the chromosome. The protein resides in the centromere. It is found in the telomere. The protein localises to the cytoplasm. Its subcellular location is the cytoskeleton. It localises to the microtubule organizing center. The protein resides in the centrosome. It is found in the kinetochore. Required for G1/S transition. Recruits and stabilizes the origin recognition complex (ORC) onto chromatin during G1 to establish pre-replication complex (preRC) and to heterochromatic sites in post-replicated cells. Binds a combination of DNA and histone methylation repressive marks on heterochromatin. Binds histone H3 and H4 trimethylation marks H3K9me3, H3K27me3 and H4K20me3 in a cooperative manner with DNA methylation. Required for silencing of major satellite repeats. May be important ORC2, ORC3 and ORC4 stability. The polypeptide is Leucine-rich repeat and WD repeat-containing protein 1 (LRWD1) (Homo sapiens (Human)).